Reading from the N-terminus, the 547-residue chain is Nitrosoguanidine resistance protein SNG1 (547 aa).

A disordered region spans residues 35 to 86 (NQRFAEGSGHSSDLAKSLEDYRPPDEKPSSLSSVGEGGANEEEKGGNDGGPL). The segment covering 50–62 (KSLEDYRPPDEKP) has biased composition (basic and acidic residues). Phosphothreonine is present on T91. 8 consecutive transmembrane segments (helical) span residues 109-129 (FVLN…IYWG), 159-179 (ISAI…IYNA), 318-338 (ILMA…VLQL), 363-383 (LISW…SAIF), 394-414 (GGFV…GGAN), 418-438 (LSLV…TWII), 457-477 (YGYI…FLNL), and 488-508 (ILVA…KFAG). Over residues 526-536 (ATQRASRPAEA) the composition is skewed to low complexity. The interval 526–547 (ATQRASRPAEANTDKNNNPPGN) is disordered.

The protein to yeast YJR015W.

It is found in the membrane. May function as a N-methyl-N'nitro-N-nitrosoguanidine (MNNG) export permease. The sequence is that of Nitrosoguanidine resistance protein SNG1 (SNG1) from Saccharomyces cerevisiae (strain ATCC 204508 / S288c) (Baker's yeast).